Consider the following 104-residue polypeptide: Probable head completion protein 1 (104 aa).

Belongs to the skunalikevirus head completion protein 1 family.

It is found in the virion. Functionally, probable head completion protein that exhibits an open central channel for viral DNA ejection. Part of the head-tail connector by binding to the portal protein and to the head completion protein 2. Plays a role in morphogenesis of the virion capsid after genome packaging. The chain is Probable head completion protein 1 from Lactococcus lactis (Lactococcus lactis bacteriophage p2).